The primary structure comprises 106 residues: Oncosphere antigen B (106 aa).

Residues 11–106 enclose the Fibronectin type-III domain; sequence LPQHFRWSQV…QSELRSMCIK (96 aa).

The protein is Oncosphere antigen B (ONCB) of Hydatigena taeniaeformis (Feline tapeworm).